The chain runs to 1014 residues: Isoleucine--tRNA ligase (1014 aa).

The 'HIGH' region motif lies at 48 to 58 (PTANGRPGIHH). The 'KMSKS' region signature appears at 628–632 (KMSKS). Residue Lys-631 coordinates ATP.

This sequence belongs to the class-I aminoacyl-tRNA synthetase family. IleS type 2 subfamily. In terms of assembly, monomer. Requires Zn(2+) as cofactor.

The protein resides in the cytoplasm. The catalysed reaction is tRNA(Ile) + L-isoleucine + ATP = L-isoleucyl-tRNA(Ile) + AMP + diphosphate. In terms of biological role, catalyzes the attachment of isoleucine to tRNA(Ile). As IleRS can inadvertently accommodate and process structurally similar amino acids such as valine, to avoid such errors it has two additional distinct tRNA(Ile)-dependent editing activities. One activity is designated as 'pretransfer' editing and involves the hydrolysis of activated Val-AMP. The other activity is designated 'posttransfer' editing and involves deacylation of mischarged Val-tRNA(Ile). This chain is Isoleucine--tRNA ligase, found in Dehalococcoides mccartyi (strain ATCC BAA-2266 / KCTC 15142 / 195) (Dehalococcoides ethenogenes (strain 195)).